The primary structure comprises 301 residues: Pantothenate synthetase (301 aa).

Residue 30–37 (MGNLHEGH) coordinates ATP. Residue H37 is the Proton donor of the active site. Q61 is a (R)-pantoate binding site. Q61 lines the beta-alanine pocket. Residue 149–152 (GEKD) participates in ATP binding. Q155 lines the (R)-pantoate pocket. ATP contacts are provided by residues V178 and 186 to 189 (MSSR).

This sequence belongs to the pantothenate synthetase family. As to quaternary structure, homodimer.

The protein localises to the cytoplasm. The catalysed reaction is (R)-pantoate + beta-alanine + ATP = (R)-pantothenate + AMP + diphosphate + H(+). Its pathway is cofactor biosynthesis; (R)-pantothenate biosynthesis; (R)-pantothenate from (R)-pantoate and beta-alanine: step 1/1. Its function is as follows. Catalyzes the condensation of pantoate with beta-alanine in an ATP-dependent reaction via a pantoyl-adenylate intermediate. The polypeptide is Pantothenate synthetase (Vibrio vulnificus (strain CMCP6)).